The chain runs to 457 residues: Argininosuccinate lyase (457 aa).

It belongs to the lyase 1 family. Argininosuccinate lyase subfamily.

It localises to the cytoplasm. The catalysed reaction is 2-(N(omega)-L-arginino)succinate = fumarate + L-arginine. It participates in amino-acid biosynthesis; L-arginine biosynthesis; L-arginine from L-ornithine and carbamoyl phosphate: step 3/3. This Pasteurella multocida (strain Pm70) protein is Argininosuccinate lyase.